The following is a 602-amino-acid chain: Aspartate--tRNA(Asp/Asn) ligase (602 aa).

Glu170 lines the L-aspartate pocket. The aspartate stretch occupies residues 194 to 197 (QLFK). Residue Arg216 participates in L-aspartate binding. ATP is bound by residues 216–218 (RDE) and Gln225. Residue His448 participates in L-aspartate binding. Glu482 is a binding site for ATP. Arg489 is an L-aspartate binding site. 534-537 (GWDR) lines the ATP pocket. The interval 559–602 (GGVDPLTNAPAPITAQQRKESGVDAKPEPKGDAASAKPDAPADK) is disordered. Residues 575–589 (QRKESGVDAKPEPKG) show a composition bias toward basic and acidic residues. A compositionally biased stretch (low complexity) spans 590 to 602 (DAASAKPDAPADK).

It belongs to the class-II aminoacyl-tRNA synthetase family. Type 1 subfamily. Homodimer.

It localises to the cytoplasm. It catalyses the reaction tRNA(Asx) + L-aspartate + ATP = L-aspartyl-tRNA(Asx) + AMP + diphosphate. Aspartyl-tRNA synthetase with relaxed tRNA specificity since it is able to aspartylate not only its cognate tRNA(Asp) but also tRNA(Asn). Reaction proceeds in two steps: L-aspartate is first activated by ATP to form Asp-AMP and then transferred to the acceptor end of tRNA(Asp/Asn). This Rhodococcus jostii (strain RHA1) protein is Aspartate--tRNA(Asp/Asn) ligase.